We begin with the raw amino-acid sequence, 511 residues long: Adenosine deaminase 2 (511 aa).

The signal sequence occupies residues 1–29; it reads MLVDGPSEWPALRFLLLAVAMSFFGSALS. The interval 30–100 is dimerization; that stretch reads IDETRAHLLL…HLIERSQVFN (71 aa). Positions 112 and 114 each coordinate Zn(2+). Asp-115 lines the substrate pocket. N-linked (GlcNAc...) asparagine glycosylation occurs at Asn-127. The tract at residues 127–185 is PRB domain; the sequence is NVTYRPHCHICFTPKGIMQFRFAHPTPRTSEKCSKWILLEDYRKRVQNVTEFDDSLLRN. Residues Cys-137 and Cys-159 are joined by a disulfide bond. 2 N-linked (GlcNAc...) asparagine glycosylation sites follow: Asn-174 and Asn-185. Substrate contacts are provided by residues 204–211, His-293, and Gly-326; that span reads WSKFETIF. Zn(2+) is bound at residue His-356. Glu-359 acts as the Proton donor in catalysis. An N-linked (GlcNAc...) asparagine glycan is attached at Asn-378. The Proton acceptor role is filled by His-384. Asp-441 serves as a coordination point for Zn(2+). Asp-442 lines the substrate pocket.

Belongs to the metallo-dependent hydrolases superfamily. Adenosine and AMP deaminases family. ADGF subfamily. As to quaternary structure, homodimer. Interacts with adenosine receptors. Binds heparin. Requires Zn(2+) as cofactor.

It localises to the secreted. It carries out the reaction adenosine + H2O + H(+) = inosine + NH4(+). Adenosine deaminase that may contribute to the degradation of extracellular adenosine, a signaling molecule that controls a variety of cellular responses. Requires elevated adenosine levels for optimal enzyme activity. Binds to cell surfaces via proteoglycans and may play a role in the regulation of cell proliferation and differentiation, independently of its enzyme activity. The sequence is that of Adenosine deaminase 2 from Pongo abelii (Sumatran orangutan).